Reading from the N-terminus, the 341-residue chain is Retinol dehydrogenase 10 (341 aa).

The chain crosses the membrane as a helical; Signal-anchor span at residues 3–23 (IVVEFFVVTFKVLWAFVLAAA). Residue 40–64 (LITGAGSGLGRLFALEFARRRALLV) coordinates NADP(+). Serine 197 serves as a coordination point for substrate. Tyrosine 210 acts as the Proton acceptor in catalysis.

The protein belongs to the short-chain dehydrogenases/reductases (SDR) family. In terms of tissue distribution, detected in retinal pigment epithelium (at protein level). Detected in retina, retinal pigment epithelium, and at lower levels in cornea, liver, kidney, pancreas, lung, brain and skeletal muscle.

It is found in the microsome membrane. The protein localises to the endoplasmic reticulum membrane. The catalysed reaction is all-trans-retinol + NADP(+) = all-trans-retinal + NADPH + H(+). Its pathway is cofactor metabolism; retinol metabolism. Its function is as follows. Retinol dehydrogenase with a clear preference for NADP. Converts all-trans-retinol to all-trans-retinal. Has no detectable activity towards 11-cis-retinol, 9-cis-retinol and 13-cis-retinol. The chain is Retinol dehydrogenase 10 (RDH10) from Bos taurus (Bovine).